We begin with the raw amino-acid sequence, 164 residues long: V-type proton ATPase 16 kDa proteolipid subunit (164 aa).

The Lumenal segment spans residues 1-10 (MSDLCPPTAP). Residues 11 to 31 (FFGFMGAAVALIFANLGAAYG) form a helical membrane-spanning segment. The Cytoplasmic segment spans residues 32-53 (TAKSGVGVSSMGVMKPDLVMKS). Residues 54-74 (IIPVVMAGVLGIYGLIIAVII) form a helical membrane-spanning segment. The Lumenal segment spans residues 75–96 (GNGVKGPEGGKPQYSSFTGFAH). Residues 97-118 (LAAGLACGLSGMAAGIAIGIVG) traverse the membrane as a helical segment. At 119–130 (DAGVRASAQQAK) the chain is on the cytoplasmic side. The chain crosses the membrane as a helical span at residues 131 to 155 (LYVGMVLILIFAEALGLYGLIVGLI). Residues 156-164 (LTSKEAPCS) lie on the Lumenal side of the membrane.

It belongs to the V-ATPase proteolipid subunit family. In terms of assembly, V-ATPase is a heteromultimeric enzyme composed of a peripheral catalytic V1 complex (main components: subunits A, B, C, D, E, and F) attached to an integral membrane V0 proton pore complex (main component: the proteolipid protein; which is present as a hexamer that forms the proton-conducting pore).

It localises to the vacuole membrane. Functionally, proton-conducting pore forming subunit of the membrane integral V0 complex of vacuolar ATPase. V-ATPase is responsible for acidifying a variety of intracellular compartments in eukaryotic cells. The polypeptide is V-type proton ATPase 16 kDa proteolipid subunit (VAP) (Chrysotila carterae (Marine alga)).